We begin with the raw amino-acid sequence, 197 residues long: Imidazoleglycerol-phosphate dehydratase (197 aa).

The protein belongs to the imidazoleglycerol-phosphate dehydratase family.

It is found in the cytoplasm. The catalysed reaction is D-erythro-1-(imidazol-4-yl)glycerol 3-phosphate = 3-(imidazol-4-yl)-2-oxopropyl phosphate + H2O. Its pathway is amino-acid biosynthesis; L-histidine biosynthesis; L-histidine from 5-phospho-alpha-D-ribose 1-diphosphate: step 6/9. The protein is Imidazoleglycerol-phosphate dehydratase of Bradyrhizobium diazoefficiens (strain JCM 10833 / BCRC 13528 / IAM 13628 / NBRC 14792 / USDA 110).